We begin with the raw amino-acid sequence, 206 residues long: Large ribosomal subunit protein uL4 (206 aa).

Polar residues predominate over residues 43-52; sequence NKRQGTQSAK. A disordered region spans residues 43-86; sequence NKRQGTQSAKTRAEVSGGGRKPWRQKGTGHARQGSTRSPQWKGG.

It belongs to the universal ribosomal protein uL4 family. In terms of assembly, part of the 50S ribosomal subunit.

One of the primary rRNA binding proteins, this protein initially binds near the 5'-end of the 23S rRNA. It is important during the early stages of 50S assembly. It makes multiple contacts with different domains of the 23S rRNA in the assembled 50S subunit and ribosome. Its function is as follows. Forms part of the polypeptide exit tunnel. The polypeptide is Large ribosomal subunit protein uL4 (Lachnoclostridium phytofermentans (strain ATCC 700394 / DSM 18823 / ISDg) (Clostridium phytofermentans)).